Reading from the N-terminus, the 877-residue chain is SRP-independent targeting protein 1 (877 aa).

S309, S310, S311, S332, and S334 each carry phosphoserine. Disordered regions lie at residues 369 to 414 (LRKQ…PSND), 446 to 521 (DDYT…DVLS), and 550 to 579 (KPFNQKFPNSQQPDSAGASSPKRSTSSNHF). Residues 389–402 (RSQSYSSSNMSRSP) show a composition bias toward low complexity. A coiled-coil region spans residues 412 to 441 (SNDELVYDELNNQINEVQDRAKNEEIVLYN). Over residues 447-462 (DYTKERGEQEQDRTSY) the composition is skewed to basic and acidic residues. Over residues 470 to 501 (YDDEEGGNEDNYDDDEDDDDDDDDDDESDDEG) the composition is skewed to acidic residues. Polar residues-rich tracts occupy residues 510-521 (LSRSGSSTDVLS) and 551-579 (PFNQKFPNSQQPDSAGASSPKRSTSSNHF). Glycyl lysine isopeptide (Lys-Gly) (interchain with G-Cter in ubiquitin) cross-links involve residues K668 and K670. A phosphoserine mark is found at S692, S694, and S706. A disordered region spans residues 773-815 (SLPKEREDDNDSTNSTIVPNHPDNDNYNDNDNDNNTGINSNNF). The span at 805–815 (DNNTGINSNNF) shows a compositional bias: low complexity. S841 is subject to Phosphoserine.

In terms of assembly, interacts with ENV10/SND2.

It localises to the cytoplasm. In terms of biological role, functions in the SND pathway, a SRP (signal recognition particle) and GET (guided entry of tail-anchored proteins) independent pathway for targeting a broad range of substrate proteins to the endoplasmic reticulum. SND functions in parallel to GET in targeting proteins with downstream hydrophobic motifs. This Saccharomyces cerevisiae (strain ATCC 204508 / S288c) (Baker's yeast) protein is SRP-independent targeting protein 1.